The chain runs to 173 residues: Small ribosomal subunit protein mS25 (173 aa).

The protein belongs to the mitochondrion-specific ribosomal protein mS25 family. As to quaternary structure, component of the mitochondrial small ribosomal subunit (mt-SSU). Mature mammalian 55S mitochondrial ribosomes consist of a small (28S) and a large (39S) subunit. The 28S small subunit contains a 12S ribosomal RNA (12S mt-rRNA) and 30 different proteins. The 39S large subunit contains a 16S rRNA (16S mt-rRNA), a copy of mitochondrial valine transfer RNA (mt-tRNA(Val)), which plays an integral structural role, and 52 different proteins.

Its subcellular location is the mitochondrion. This Homo sapiens (Human) protein is Small ribosomal subunit protein mS25 (MRPS25).